The following is a 548-amino-acid chain: Glutamyl-tRNA(Gln) amidotransferase subunit B, chloroplastic/mitochondrial (548 aa).

It belongs to the GatB/GatE family. GatB subfamily. As to quaternary structure, subunit of the heterotrimeric GatCAB amidotransferase (AdT) complex, composed of A, B and C subunits.

It is found in the mitochondrion. The protein resides in the plastid. Its subcellular location is the chloroplast. The catalysed reaction is L-glutamyl-tRNA(Gln) + L-glutamine + ATP + H2O = L-glutaminyl-tRNA(Gln) + L-glutamate + ADP + phosphate + H(+). Functionally, allows the formation of correctly charged Gln-tRNA(Gln) through the transamidation of misacylated Glu-tRNA(Gln) in chloroplasts and mitochondria. The reaction takes place in the presence of glutamine and ATP through an activated gamma-phospho-Glu-tRNA(Gln). The protein is Glutamyl-tRNA(Gln) amidotransferase subunit B, chloroplastic/mitochondrial of Sorghum bicolor (Sorghum).